Reading from the N-terminus, the 777-residue chain is Subtilisin-like protease SBT3.3 (777 aa).

An N-terminal signal peptide occupies residues 1–24; sequence MRSFRSSILLVLLSLITVLNATRA. The propeptide at 25–111 is removed in mature form; the sequence is RSETESKVHI…VIPDGFHELA (87 aa). In terms of domain architecture, Inhibitor I9 spans 32–109; it reads VHIVYLGEKK…VHVIPDGFHE (78 aa). The Peptidase S8 domain occupies 115 to 624; that stretch reads TWEYLGLSSA…GGIVNPEKAA (510 aa). Asparagine 131 carries N-linked (GlcNAc...) asparagine glycosylation. Catalysis depends on aspartate 145, which acts as the Charge relay system. N-linked (GlcNAc...) asparagine glycosylation occurs at asparagine 204. Histidine 220 serves as the catalytic Charge relay system. N-linked (GlcNAc...) asparagine glycosylation is found at asparagine 235, asparagine 397, asparagine 412, asparagine 508, and asparagine 540. Positions 403–481 constitute a PA domain; that stretch reads VCESLNLNPN…ELGTDILSYI (79 aa). Serine 555 (charge relay system) is an active-site residue. N-linked (GlcNAc...) asparagine glycosylation occurs at asparagine 647.

Belongs to the peptidase S8 family.

It localises to the secreted. The protein localises to the extracellular space. It is found in the extracellular matrix. Functionally, serine protease that plays a role in the control of the establishment of immune priming and systemic induced resistance. In Arabidopsis thaliana (Mouse-ear cress), this protein is Subtilisin-like protease SBT3.3.